Here is a 78-residue protein sequence, read N- to C-terminus: Gas vesicle protein G (78 aa).

The protein belongs to the gas vesicle GvpG family.

It localises to the gas vesicle. Its function is as follows. Might be a minor component of the gas vesicle involved in nucleating their formation. Gas vesicles are hollow, gas filled proteinaceous nanostructures found in some microorganisms. It is not clear what function gas vesicles perform in soil bacteria. In Streptomyces sp. (strain CB03234), this protein is Gas vesicle protein G.